The following is a 413-amino-acid chain: Gamma-glutamyl phosphate reductase (413 aa).

It belongs to the gamma-glutamyl phosphate reductase family.

Its subcellular location is the cytoplasm. The catalysed reaction is L-glutamate 5-semialdehyde + phosphate + NADP(+) = L-glutamyl 5-phosphate + NADPH + H(+). It participates in amino-acid biosynthesis; L-proline biosynthesis; L-glutamate 5-semialdehyde from L-glutamate: step 2/2. Functionally, catalyzes the NADPH-dependent reduction of L-glutamate 5-phosphate into L-glutamate 5-semialdehyde and phosphate. The product spontaneously undergoes cyclization to form 1-pyrroline-5-carboxylate. The chain is Gamma-glutamyl phosphate reductase from Rhodococcus jostii (strain RHA1).